The chain runs to 480 residues: Aspartyl/glutamyl-tRNA(Asn/Gln) amidotransferase subunit B (480 aa).

Belongs to the GatB/GatE family. GatB subfamily. In terms of assembly, heterotrimer of A, B and C subunits.

It carries out the reaction L-glutamyl-tRNA(Gln) + L-glutamine + ATP + H2O = L-glutaminyl-tRNA(Gln) + L-glutamate + ADP + phosphate + H(+). The enzyme catalyses L-aspartyl-tRNA(Asn) + L-glutamine + ATP + H2O = L-asparaginyl-tRNA(Asn) + L-glutamate + ADP + phosphate + 2 H(+). In terms of biological role, allows the formation of correctly charged Asn-tRNA(Asn) or Gln-tRNA(Gln) through the transamidation of misacylated Asp-tRNA(Asn) or Glu-tRNA(Gln) in organisms which lack either or both of asparaginyl-tRNA or glutaminyl-tRNA synthetases. The reaction takes place in the presence of glutamine and ATP through an activated phospho-Asp-tRNA(Asn) or phospho-Glu-tRNA(Gln). This Streptococcus pneumoniae serotype 4 (strain ATCC BAA-334 / TIGR4) protein is Aspartyl/glutamyl-tRNA(Asn/Gln) amidotransferase subunit B.